We begin with the raw amino-acid sequence, 527 residues long: GMP synthase [glutamine-hydrolyzing] (527 aa).

One can recognise a Glutamine amidotransferase type-1 domain in the interval 11–209 (RILILDFGSQ…VLNICGCENL (199 aa)). Cys88 (nucleophile) is an active-site residue. Catalysis depends on residues His183 and Glu185. The GMPS ATP-PPase domain maps to 210-402 (WTSANIIEDA…LGLPYNMLYR (193 aa)). ATP is bound at residue 237 to 243 (SGGVDSS).

As to quaternary structure, homodimer.

It carries out the reaction XMP + L-glutamine + ATP + H2O = GMP + L-glutamate + AMP + diphosphate + 2 H(+). Its pathway is purine metabolism; GMP biosynthesis; GMP from XMP (L-Gln route): step 1/1. Functionally, catalyzes the synthesis of GMP from XMP. The protein is GMP synthase [glutamine-hydrolyzing] of Photobacterium profundum (strain SS9).